A 109-amino-acid chain; its full sequence is Small ribosomal subunit protein uS17 (109 aa).

Belongs to the universal ribosomal protein uS17 family. In terms of assembly, part of the 30S ribosomal subunit.

In terms of biological role, one of the primary rRNA binding proteins, it binds specifically to the 5'-end of 16S ribosomal RNA. The chain is Small ribosomal subunit protein uS17 from Thermoplasma acidophilum (strain ATCC 25905 / DSM 1728 / JCM 9062 / NBRC 15155 / AMRC-C165).